A 442-amino-acid polypeptide reads, in one-letter code: Tryptophan synthase beta chain 2 (442 aa).

Position 110 is an N6-(pyridoxal phosphate)lysine (lysine 110).

The protein belongs to the TrpB family. As to quaternary structure, tetramer of two alpha and two beta chains. The cofactor is pyridoxal 5'-phosphate.

The catalysed reaction is (1S,2R)-1-C-(indol-3-yl)glycerol 3-phosphate + L-serine = D-glyceraldehyde 3-phosphate + L-tryptophan + H2O. It participates in amino-acid biosynthesis; L-tryptophan biosynthesis; L-tryptophan from chorismate: step 5/5. Its function is as follows. The beta subunit is responsible for the synthesis of L-tryptophan from indole and L-serine. This chain is Tryptophan synthase beta chain 2, found in Thermococcus kodakarensis (strain ATCC BAA-918 / JCM 12380 / KOD1) (Pyrococcus kodakaraensis (strain KOD1)).